A 260-amino-acid polypeptide reads, in one-letter code: MKKADPPASEPPELEALWSSWLVDLGWQPSEPQQQQLQQLYSLVMAGNRTQNLTRITDPIDFWEKHLWDSLRGLRLLGSWDEIQAQPWRGIDIGTGAGFPGIPAQIALPQAHFTLLDSSQRKIAFVQEVLQQLSLAQARAVAQRAEIWGQDPQERGSYDLALARAVAAAEICAEYCLPLLKVGGRAILYRGHWTEAEAQTLKRALSLLGGKLIHVEAFTTPHSHGMRHCLLLEKVAPTPACYPRPPGIPKRQPLGQDKRR.

Residues Gly94, Phe99, 117–119, 145–146, and Arg164 contribute to the S-adenosyl-L-methionine site; these read DSS and AE.

The protein belongs to the methyltransferase superfamily. RNA methyltransferase RsmG family.

The protein localises to the cytoplasm. Specifically methylates the N7 position of a guanine in 16S rRNA. In Synechococcus sp. (strain JA-3-3Ab) (Cyanobacteria bacterium Yellowstone A-Prime), this protein is Ribosomal RNA small subunit methyltransferase G.